Reading from the N-terminus, the 364-residue chain is Glycine oxidase (364 aa).

Residues 12 to 13 (VI), 32 to 33 (ER), 40 to 41 (AS), 45 to 47 (GGI), and Val173 contribute to the FAD site. Arg302 provides a ligand contact to substrate. 327–333 (HYRNGLV) is a binding site for FAD.

Belongs to the DAO family. ThiO subfamily. In terms of assembly, monomer. It depends on FAD as a cofactor.

It catalyses the reaction glycine + O2 + H2O = glyoxylate + H2O2 + NH4(+). The catalysed reaction is sarcosine + O2 + H2O = methylamine + glyoxylate + H2O2. The protein operates within cofactor biosynthesis; thiamine diphosphate biosynthesis. In terms of biological role, catalyzes the oxidation of glycine, leading to glyoxyl imine and hydrogen peroxide as primary products; glyoxyl imine is used for the biosynthesis of the thiazole ring of thiamine. Otherwise, glyoxyl imine is spontaneously hydrolyzed in water to produce glyoxylate and ammonia. Can also use sarcosine (N-methylglycine) as substrate. This chain is Glycine oxidase, found in Pseudomonas aeruginosa (strain ATCC 15692 / DSM 22644 / CIP 104116 / JCM 14847 / LMG 12228 / 1C / PRS 101 / PAO1).